Reading from the N-terminus, the 464-residue chain is Glutamate decarboxylase beta (464 aa).

Residue Lys275 is modified to N6-(pyridoxal phosphate)lysine.

It belongs to the group II decarboxylase family. Requires pyridoxal 5'-phosphate as cofactor.

It carries out the reaction L-glutamate + H(+) = 4-aminobutanoate + CO2. Functionally, converts internalized glutamate to GABA and increases the internal pH. Involved in glutamate-dependent acid resistance in gastric fluid. The protein is Glutamate decarboxylase beta (gadB) of Listeria monocytogenes serovar 1/2a (strain ATCC BAA-679 / EGD-e).